Here is a 310-residue protein sequence, read N- to C-terminus: Quinolinate synthase 2 (310 aa).

Residues His-30 and Ser-47 each coordinate iminosuccinate. Cys-92 contacts [4Fe-4S] cluster. Iminosuccinate-binding positions include Tyr-118–Asn-120 and Ser-135. Cys-177 contacts [4Fe-4S] cluster. Iminosuccinate is bound by residues His-203–Glu-205 and Thr-220. Position 265 (Cys-265) interacts with [4Fe-4S] cluster.

This sequence belongs to the quinolinate synthase family. Type 2 subfamily. The cofactor is [4Fe-4S] cluster.

Its subcellular location is the cytoplasm. The catalysed reaction is iminosuccinate + dihydroxyacetone phosphate = quinolinate + phosphate + 2 H2O + H(+). It participates in cofactor biosynthesis; NAD(+) biosynthesis; quinolinate from iminoaspartate: step 1/1. Functionally, catalyzes the condensation of iminoaspartate with dihydroxyacetone phosphate to form quinolinate. This Methanosarcina acetivorans (strain ATCC 35395 / DSM 2834 / JCM 12185 / C2A) protein is Quinolinate synthase 2.